A 459-amino-acid chain; its full sequence is Bifunctional protein GlmU (459 aa).

Residues 1 to 230 are pyrophosphorylase; it reads MSNRFAVILA…FDETLGVNDR (230 aa). UDP-N-acetyl-alpha-D-glucosamine is bound by residues 9–12, Lys23, Gln73, and 78–79; these read LAAG and GT. Asp103 serves as a coordination point for Mg(2+). Residues Gly140, Glu155, Asn170, and Asn228 each coordinate UDP-N-acetyl-alpha-D-glucosamine. Asn228 is a Mg(2+) binding site. The segment at 231–251 is linker; sequence VALSQAEIIMKNRINRKNMVN. The N-acetyltransferase stretch occupies residues 252 to 459; it reads GVTIIDPSNT…VDQLLNKKKS (208 aa). UDP-N-acetyl-alpha-D-glucosamine is bound by residues Arg333 and Lys351. His363 (proton acceptor) is an active-site residue. UDP-N-acetyl-alpha-D-glucosamine-binding residues include Tyr366 and Asn377. Acetyl-CoA contacts are provided by residues 386-387, Ala423, and Arg440; that span reads NY.

This sequence in the N-terminal section; belongs to the N-acetylglucosamine-1-phosphate uridyltransferase family. In the C-terminal section; belongs to the transferase hexapeptide repeat family. Homotrimer. It depends on Mg(2+) as a cofactor.

It localises to the cytoplasm. It catalyses the reaction alpha-D-glucosamine 1-phosphate + acetyl-CoA = N-acetyl-alpha-D-glucosamine 1-phosphate + CoA + H(+). The catalysed reaction is N-acetyl-alpha-D-glucosamine 1-phosphate + UTP + H(+) = UDP-N-acetyl-alpha-D-glucosamine + diphosphate. It participates in nucleotide-sugar biosynthesis; UDP-N-acetyl-alpha-D-glucosamine biosynthesis; N-acetyl-alpha-D-glucosamine 1-phosphate from alpha-D-glucosamine 6-phosphate (route II): step 2/2. It functions in the pathway nucleotide-sugar biosynthesis; UDP-N-acetyl-alpha-D-glucosamine biosynthesis; UDP-N-acetyl-alpha-D-glucosamine from N-acetyl-alpha-D-glucosamine 1-phosphate: step 1/1. Its pathway is bacterial outer membrane biogenesis; LPS lipid A biosynthesis. Its function is as follows. Catalyzes the last two sequential reactions in the de novo biosynthetic pathway for UDP-N-acetylglucosamine (UDP-GlcNAc). The C-terminal domain catalyzes the transfer of acetyl group from acetyl coenzyme A to glucosamine-1-phosphate (GlcN-1-P) to produce N-acetylglucosamine-1-phosphate (GlcNAc-1-P), which is converted into UDP-GlcNAc by the transfer of uridine 5-monophosphate (from uridine 5-triphosphate), a reaction catalyzed by the N-terminal domain. The chain is Bifunctional protein GlmU from Bacillus thuringiensis subsp. konkukian (strain 97-27).